Consider the following 490-residue polypeptide: JNK-interacting protein 1 (490 aa).

2 disordered regions span residues 1-71 and 213-254; these read MADS…DHEP and EDSS…PVSQ. Over residues 231–249 the composition is skewed to polar residues; the sequence is GHSTAHSPNDFKSMSPQIT. Residues 271–332 enclose the SH3 domain; it reads MLEATHRGLH…PSAYAVDLDY (62 aa). Residues 344–479 form the PID domain; the sequence is KERYLLGYLG…FQRFYQKFIE (136 aa).

This sequence belongs to the JIP scaffold family. In terms of assembly, forms homo- and heterooligomeric complexes. Binds Hep, a dual specificity protein kinase in the JNK pathway, but not its downstream target bsk. The C-terminal region interacts with the kinesin light chain protein, Klc, and the C-terminal PTY motif of amyloid-beta protein precursor-like protein, Appl. Expressed in the brain, CNS, PNS and cells posterior to the morphogenetic furrow in the eye imaginal disk of late embryos.

It localises to the cytoplasm. The JNK-interacting protein (JIP) group of scaffold proteins selectively mediates JNK signaling by aggregating specific components of the MAPK cascade to form a functional JNK signaling module. May function as a regulator of vesicle transport, through interactions with the JNK-signaling components and motor proteins. The sequence is that of JNK-interacting protein 1 (Aplip1) from Drosophila melanogaster (Fruit fly).